A 433-amino-acid polypeptide reads, in one-letter code: Acetyl-CoA-benzylalcohol acetyltransferase (433 aa).

Residues His-152 and Asp-377 each act as proton acceptor in the active site.

Belongs to the plant acyltransferase family.

The catalysed reaction is benzyl alcohol + acetyl-CoA = benzyl acetate + CoA. It carries out the reaction (E)-cinnamyl alcohol + acetyl-CoA = (E)-cinnamyl acetate + CoA. Functionally, involved in the biosynthesis of benzyl acetate, a major constituent of the floral scent. Can use benzylalcohol, cinnamylalcohol, 3-cis-hexene-1-ol or heptanol as substrates. Has some activity with 2-phenylethanol and 2-naphtalene-ethanol. This chain is Acetyl-CoA-benzylalcohol acetyltransferase (BEAT), found in Clarkia breweri (Fairy fans).